The following is a 250-amino-acid chain: Ribose-5-phosphate isomerase A (250 aa).

Residues 33–36 (TGST), 89–92 (DGAD), and 102–105 (KGGG) each bind substrate. E111 serves as the catalytic Proton acceptor. Residue K129 coordinates substrate.

It belongs to the ribose 5-phosphate isomerase family. As to quaternary structure, homodimer.

It catalyses the reaction aldehydo-D-ribose 5-phosphate = D-ribulose 5-phosphate. It functions in the pathway carbohydrate degradation; pentose phosphate pathway; D-ribose 5-phosphate from D-ribulose 5-phosphate (non-oxidative stage): step 1/1. Catalyzes the reversible conversion of ribose-5-phosphate to ribulose 5-phosphate. This chain is Ribose-5-phosphate isomerase A, found in Cereibacter sphaeroides (strain ATCC 17025 / ATH 2.4.3) (Rhodobacter sphaeroides).